Reading from the N-terminus, the 345-residue chain is Serine/threonine-protein kinase US3 homolog (345 aa).

The Protein kinase domain occupies 49–334; the sequence is FSVLETFTPG…KALLDFAAFY (286 aa). Residues 55 to 63 and Lys78 each bind ATP; that span reads FTPGAEGFT. The Proton acceptor role is filled by Asp162.

This sequence belongs to the protein kinase superfamily. Ser/Thr protein kinase family. In terms of processing, phosphorylated by UL13 homolog; this phosphorylation regulates subsequent phosphorylation of UL31 and UL34 homologs by US3. Autophosphorylated.

The protein localises to the host cytoplasm. Its subcellular location is the host nucleus. It carries out the reaction L-seryl-[protein] + ATP = O-phospho-L-seryl-[protein] + ADP + H(+). It catalyses the reaction L-threonyl-[protein] + ATP = O-phospho-L-threonyl-[protein] + ADP + H(+). In terms of biological role, multifunctional serine/threonine kinase that plays a role in several processes including egress of virus particles from the nucleus, modulation of the actin cytoskeleton and inhibition of apoptosis. Phosphorylates UL31 and UL34 homologs, two critical regulators of capsid budding from nucleus to endoplasmic reticulum, thereby facilitating virion egress. Modulates and redistributes host components of the nuclear envelope, including LMNA, emerin/EMD and the nuclear matrix protein MATR3. Phosphorylates envelope glycoprotein B (gB), probably to direct it to the cell surface. Promotes virus intracellular spread by restructuring host cell cytoskeleton. Blocks host apoptosis to extend cell survival and allow efficient viral replication. Promotes viral gene expression by phosphorylating host HDAC2 to reduce viral genome silencing. This chain is Serine/threonine-protein kinase US3 homolog (US2), found in Chlorocebus aethiops (Green monkey).